The chain runs to 28 residues: Humanin-like 4 (28 aa).

The protein belongs to the humanin family. Highly expressed in testis. Also expressed in kidney, heart, skeletal muscles and brain.

The protein resides in the secreted. The protein localises to the cytoplasm. Its function is as follows. Plays a role as a neuroprotective and antiapoptotic factor. This is Humanin-like 4 from Homo sapiens (Human).